Reading from the N-terminus, the 346-residue chain is MRPIMLMGHERSLTQVKYNREGDLIFTSGKDNVASVWYAMNGERLGTLEGHNGSIWSIDVDQHTEYAVTGSADFSVKVWRVRDGSIAHSWDTRTPVRRVEFSPTGDRVLAVLDNVMNYAGAIVVFSVTRDANNQITGFNSGLSCEILTQEGCAPVLVASWSYDGKYIVAGHQDGKISKYNGVTGECLEIKDLHKQRVSDIQFSLDRTYFLTTSRDSYANLVDVETFEVLKTYETDCPLNSGCITPLKEFVILGGGQDARDVTTTSAREGKFEAKFYHKLFQVEIGRVDDHFGPVNYIAVSPQGTSYASGGEDGFVRLHHFDKSYFDFKFDVEKSADAQKKVDTADR.

WD repeat units lie at residues 8–47, 50–89, 150–189, 192–233, and 289–328; these read GHER…RLGT, GHNG…IAHS, EGCA…CLEI, LHKQ…KTYE, and DHFG…FDFK.

Belongs to the eIF-3 subunit I family. In terms of assembly, component of the eukaryotic translation initiation factor 3 (eIF-3) complex.

Its subcellular location is the cytoplasm. Component of the eukaryotic translation initiation factor 3 (eIF-3) complex, which is involved in protein synthesis of a specialized repertoire of mRNAs and, together with other initiation factors, stimulates binding of mRNA and methionyl-tRNAi to the 40S ribosome. The eIF-3 complex specifically targets and initiates translation of a subset of mRNAs involved in cell proliferation. The chain is Eukaryotic translation initiation factor 3 subunit I from Eremothecium gossypii (strain ATCC 10895 / CBS 109.51 / FGSC 9923 / NRRL Y-1056) (Yeast).